A 289-amino-acid polypeptide reads, in one-letter code: 4-diphosphocytidyl-2-C-methyl-D-erythritol kinase (289 aa).

Residue Lys10 is part of the active site. 94–104 (PVAAGLAGGSS) contacts ATP. Asp136 is a catalytic residue.

The protein belongs to the GHMP kinase family. IspE subfamily.

It carries out the reaction 4-CDP-2-C-methyl-D-erythritol + ATP = 4-CDP-2-C-methyl-D-erythritol 2-phosphate + ADP + H(+). It participates in isoprenoid biosynthesis; isopentenyl diphosphate biosynthesis via DXP pathway; isopentenyl diphosphate from 1-deoxy-D-xylulose 5-phosphate: step 3/6. Catalyzes the phosphorylation of the position 2 hydroxy group of 4-diphosphocytidyl-2C-methyl-D-erythritol. The polypeptide is 4-diphosphocytidyl-2-C-methyl-D-erythritol kinase (Bacillus mycoides (strain KBAB4) (Bacillus weihenstephanensis)).